The primary structure comprises 311 residues: DNA-directed RNA polymerase subunit alpha (311 aa).

Residues 1 to 226 (MIEFEKPNIT…EHLDLFTNLT (226 aa)) are alpha N-terminal domain (alpha-NTD). Residues 243-311 (DDRILDRTIE…IDLGLGLKDK (69 aa)) form an alpha C-terminal domain (alpha-CTD) region.

It belongs to the RNA polymerase alpha chain family. As to quaternary structure, homodimer. The RNAP catalytic core consists of 2 alpha, 1 beta, 1 beta' and 1 omega subunit. When a sigma factor is associated with the core the holoenzyme is formed, which can initiate transcription.

It catalyses the reaction RNA(n) + a ribonucleoside 5'-triphosphate = RNA(n+1) + diphosphate. Its function is as follows. DNA-dependent RNA polymerase catalyzes the transcription of DNA into RNA using the four ribonucleoside triphosphates as substrates. This is DNA-directed RNA polymerase subunit alpha from Streptococcus pneumoniae serotype 4 (strain ATCC BAA-334 / TIGR4).